The sequence spans 711 residues: C-Jun-amino-terminal kinase-interacting protein 1 (711 aa).

The segment at 1 to 27 (MAERESGGLGGGAASPPAASPFLGLHI) is disordered. The segment covering 14–25 (ASPPAASPFLGL) has biased composition (low complexity). Phosphoserine occurs at positions 15, 29, and 40. A disordered region spans residues 78–371 (AGGGGAGSRL…PPRASLSSDT (294 aa)). Thr103 carries the phosphothreonine; by MAPK8, MAPK9 and MAPK10 modification. Over residues 105–116 (GAEDDEEDDDEE) the composition is skewed to acidic residues. The interval 127 to 285 (PKAESGQEPA…EATEEIYLTP (159 aa)) is JNK-binding domain (JBD). Positions 139-149 (GQGQSQGQSQG) are enriched in low complexity. At Ser152 the chain carries Phosphoserine. The minimal inhibitory domain (MID) stretch occupies residues 157 to 176 (RPKRPTTLNLFPQVPRSQDT). Residues 162–182 (TTLNLFPQVPRSQDTLNNNSL) show a composition bias toward polar residues. Ser181, Ser187, Ser193, Ser195, and Ser196 each carry phosphoserine. Over residues 194–204 (RSSSPLKTGEQ) the composition is skewed to polar residues. Thr205 bears the Phosphothreonine; by MAPK8, MAPK9 and MAPK10 mark. Ser214 carries the post-translational modification Phosphoserine. Positions 228-244 (DRGTSTDSPCRRSTATQ) are enriched in polar residues. Over residues 267 to 277 (IHYQADVRLEA) the composition is skewed to basic and acidic residues. An interaction with MAP3K7 region spans residues 283–471 (LTPVQRPPDA…NVFMSGRSRS (189 aa)). A phosphoserine mark is found at Ser311, Ser328, Ser330, Ser340, Ser355, Ser366, Ser369, Ser407, and Ser409. Short sequence motifs (D-box) lie at residues 353–360 (RGSLGEPP) and 364–372 (RASLSSDTS). Phosphothreonine is present on Thr411. A disordered region spans residues 429 to 451 (EEYEEAPRPQPPACLSEDSTPDE). Phosphoserine occurs at positions 444 and 447. At Thr448 the chain carries Phosphothreonine. Phosphoserine occurs at positions 469, 471, 472, and 473. The segment at 471 to 660 (SSSAESFGLF…PKNNKYFGFI (190 aa)) is interaction with VRK2. The 62-residue stretch at 488–549 (EQEQTHRAIF…PAYYAIEVTK (62 aa)) folds into the SH3 domain. One can recognise a PID domain in the interval 561 to 700 (SDWVDQFRVK…FQQFYKQFVE (140 aa)).

Belongs to the JIP scaffold family. In terms of assembly, forms homo- or heterooligomeric complexes. Binds specific components of the JNK signaling pathway namely, MAPK8/JNK1, MAPK9/JNK2, MAPK10/JNK3, MAP2K7/MKK7, MAP3K11/MLK3 and DLK1. Also binds the proline-rich domain-containing splice variant of apolipoprotein E receptor 2 (ApoER2). Interacts, via the PID domain, with ARHGEF28. Binds the cytoplasmic tails of LRP1 and LRP2 (Megalin). Binds the TPR motif-containing C-terminal of KNS2, then the pre-assembled MAPK8IP1 scaffolding complexes are transported as a cargo of kinesin, to the required subcellular location. Interacts with the cytoplasmic domain of APP. Interacts with DCLK2. Interacts with MAP3K7/TAK1. Interacts with isoform 1 and isoform 2 of VRK2. Found in a complex with SH3RF1, RAC1, MAP3K11/MLK3, MAP2K7/MKK7 and MAPK8/JNK1. Found in a complex with SH3RF1, RAC2, MAP3K7/TAK1, MAP2K7/MKK7, MAPK8/JNK1 and MAPK9/JNK2. Interacts with SH3RF2. Phosphorylated by MAPK8, MAPK9 and MAPK10. Phosphorylation on Thr-103 is also necessary for the dissociation and activation of MAP3K12. Phosphorylated by isoform 1 and isoform 2 of VRK2. Hyperphosphorylated during mitosis following activation of stress-activated and MAP kinases. In terms of processing, ubiquitinated. Two preliminary events are required to prime for ubiquitination; phosphorylation and an increased in intracellular calcium concentration. Then, the calcium influx initiates ubiquitination and degradation by the ubiquitin-proteasome pathway. In terms of tissue distribution, highly expressed in brain. Expressed in neurons, localizing to neurite tips in differentiating cells. Also expressed in the pancreas, testis and prostate. Low levels in heart, ovary and small intestine. Decreased levels in pancreatic beta cells sensitize cells to IL-1-beta-induced apoptosis.

Its subcellular location is the cytoplasm. It localises to the perinuclear region. The protein resides in the nucleus. It is found in the endoplasmic reticulum membrane. The protein localises to the mitochondrion membrane. In terms of biological role, the JNK-interacting protein (JIP) group of scaffold proteins selectively mediates JNK signaling by aggregating specific components of the MAPK cascade to form a functional JNK signaling module. Required for JNK activation in response to excitotoxic stress. Cytoplasmic MAPK8IP1 causes inhibition of JNK-regulated activity by retaining JNK in the cytoplasm and inhibiting JNK phosphorylation of c-Jun. May also participate in ApoER2-specific reelin signaling. Directly, or indirectly, regulates GLUT2 gene expression and beta-cell function. Appears to have a role in cell signaling in mature and developing nerve terminals. May function as a regulator of vesicle transport, through interactions with the JNK-signaling components and motor proteins. Functions as an anti-apoptotic protein and whose level seems to influence the beta-cell death or survival response. Acts as a scaffold protein that coordinates with SH3RF1 in organizing different components of the JNK pathway, including RAC1 or RAC2, MAP3K11/MLK3 or MAP3K7/TAK1, MAP2K7/MKK7, MAPK8/JNK1 and/or MAPK9/JNK2 into a functional multiprotein complex to ensure the effective activation of the JNK signaling pathway. Regulates the activation of MAPK8/JNK1 and differentiation of CD8(+) T-cells. This Homo sapiens (Human) protein is C-Jun-amino-terminal kinase-interacting protein 1 (MAPK8IP1).